Consider the following 1537-residue polypeptide: DNA excision repair protein ERCC-6-like 2 (1537 aa).

The 186-residue stretch at 134-319 (YRHYIEGRGC…WCVMDWAVPG (186 aa)) folds into the Helicase ATP-binding domain. 147-154 (DDMGLGKT) is a binding site for ATP. The DEAH box motif lies at 270 to 273 (DEAH). In terms of domain architecture, Helicase C-terminal spans 510–660 (VLQQLLNHFR…CVVVGSENAK (151 aa)). Disordered regions lie at residues 715–735 (KGEP…QEPT) and 749–768 (SVGH…TSRT). The segment covering 755-764 (GKTDKHKFSD) has biased composition (basic and acidic residues). Positions 772–783 (PAQLTLLQCGFS) match the Atypical PIP-box motif. Disordered stretches follow at residues 791 to 811 (KSDQ…DEQP), 833 to 891 (SEHQ…EDSD), and 918 to 948 (EDSE…PNLL). Positions 834–857 (EHQKSDNIQTPDEKCVSDKSEKTL) are enriched in basic and acidic residues. 2 positions are modified to phosphoserine: Ser-968 and Ser-971. A disordered region spans residues 1274-1306 (VHKKEERVRNKSKEKESLLKENPSNDSTLSCYD). Over residues 1276–1292 (KKEERVRNKSKEKESLL) the composition is skewed to basic and acidic residues. Residues 1295–1306 (NPSNDSTLSCYD) are compositionally biased toward polar residues.

Belongs to the SNF2/RAD54 helicase family. In terms of assembly, interacts with NEK6. Interacts (via an atypical PIP-box) with PCNA; this interaction facilitates cenrtomeric localization of ERCC6L2. Interacts with CYREN; this interaction is DNA independent. Interacts with XRCC6 and XRCC5. Post-translationally, phosphorylated by NEK6.

It is found in the nucleus. The protein localises to the cytoplasm. It localises to the cytoskeleton. The protein resides in the microtubule organizing center. Its subcellular location is the centrosome. It is found in the mitochondrion. The protein localises to the chromosome. It localises to the centromere. Its function is as follows. Promotes double-strand break (DSB) end-joining and facilitates programmed recombination by controlling how DNA ends are joined in a spatially oriented manner during repair. Also plays a role in DNA repair by restricting DNA end resection in double strand break (DSB) repair. Facilitates replication of complex DNA regions and regulates the maintenance of chromatin structure. The sequence is that of DNA excision repair protein ERCC-6-like 2 from Mus musculus (Mouse).